Consider the following 690-residue polypeptide: Methionine--tRNA ligase (690 aa).

The 'HIGH' region motif lies at 13–23; the sequence is PYANGQIHIGH. The Zn(2+) site is built by cysteine 144, cysteine 147, cysteine 157, and cysteine 160. Residues 335 to 339 carry the 'KMSKS' region motif; sequence KMSKS. ATP is bound at residue lysine 338. The 107-residue stretch at 584–690 folds into the tRNA-binding domain; sequence DFAKIDLRVA…SGAVPGMRIR (107 aa).

This sequence belongs to the class-I aminoacyl-tRNA synthetase family. MetG type 1 subfamily. In terms of assembly, homodimer. Zn(2+) serves as cofactor.

It localises to the cytoplasm. It catalyses the reaction tRNA(Met) + L-methionine + ATP = L-methionyl-tRNA(Met) + AMP + diphosphate. Functionally, is required not only for elongation of protein synthesis but also for the initiation of all mRNA translation through initiator tRNA(fMet) aminoacylation. The chain is Methionine--tRNA ligase from Cupriavidus metallidurans (strain ATCC 43123 / DSM 2839 / NBRC 102507 / CH34) (Ralstonia metallidurans).